The sequence spans 605 residues: Hepatocyte nuclear factor 1-alpha-A (605 aa).

The tract at residues 1-31 is dimerization; the sequence is MASQLSYLQRELLQALLESGVTKEALKKALA. Residues 1–32 form the HNF-p1 domain; the sequence is MASQLSYLQRELLQALLESGVTKEALKKALAD. Residues 57–81 are disordered; sequence QLPNGLGESHISEDESSDDGEDFTP. A POU-specific atypical domain is found at 85-180; it reads KELERLSPEE…IARLFTFTEF (96 aa). Interaction with DNA regions lie at residues 128-130, 141-147, 153-156, 206-209, 266-268, and 273-276; these read QRE, HLSQHLN, KTQK, RFKW, RVY, and NRRK. Positions 200–208 match the Nuclear localization signal motif; sequence KKMRRNRFK. Positions 202–282 form a DNA-binding region, homeobox; HNF1-type; the sequence is MRRNRFKWGP…NRRKEEAFRH (81 aa). Over residues 321 to 335 the composition is skewed to polar residues; it reads DRSAVMANSQSTPSP. Residues 321 to 343 form a disordered region; that stretch reads DRSAVMANSQSTPSPSALEPSHS. Residues 448–453 form a not present in other members of the HNF1 family region; it reads PSHQLH.

It belongs to the HNF1 homeobox family. As to quaternary structure, binds DNA as dimer. Forms a homodimer or heterodimer with HNF1-alpha-B. Potentially also form a heterodimer with HNF1-beta. Protein expressed in liver, stomach, small intestine, colon and kidney. Not expressed in spleen, lung, blood, heart muscle, skeletal muscle, testis and brain.

Its subcellular location is the nucleus. Transcriptional activator that regulates the tissue specific expression of multiple genes, especially in pancreas and liver. Binds to the hepatocyte specific promoter element HP1. Binds to the inverted palindrome 5'-GTTAATNATTAAC-3'. In Xenopus laevis (African clawed frog), this protein is Hepatocyte nuclear factor 1-alpha-A (hnf1a-a).